We begin with the raw amino-acid sequence, 81 residues long: UPF0180 protein RBAM_013970 (81 aa).

It belongs to the UPF0180 family.

This Bacillus velezensis (strain DSM 23117 / BGSC 10A6 / LMG 26770 / FZB42) (Bacillus amyloliquefaciens subsp. plantarum) protein is UPF0180 protein RBAM_013970.